The sequence spans 209 residues: Chaperone protein TorD (209 aa).

Belongs to the TorD/DmsD family. TorD subfamily.

It is found in the cytoplasm. Functionally, involved in the biogenesis of TorA. Acts on TorA before the insertion of the molybdenum cofactor and, as a result, probably favors a conformation of the apoenzyme that is competent for acquiring the cofactor. The polypeptide is Chaperone protein TorD (Shewanella sp. (strain MR-4)).